The following is a 420-amino-acid chain: ATP phosphoribosyltransferase regulatory subunit (420 aa).

Belongs to the class-II aminoacyl-tRNA synthetase family. HisZ subfamily. Heteromultimer composed of HisG and HisZ subunits.

It localises to the cytoplasm. Its pathway is amino-acid biosynthesis; L-histidine biosynthesis; L-histidine from 5-phospho-alpha-D-ribose 1-diphosphate: step 1/9. Required for the first step of histidine biosynthesis. May allow the feedback regulation of ATP phosphoribosyltransferase activity by histidine. This Bacillus anthracis (strain A0248) protein is ATP phosphoribosyltransferase regulatory subunit.